Here is a 402-residue protein sequence, read N- to C-terminus: Formate-dependent phosphoribosylglycinamide formyltransferase (402 aa).

N(1)-(5-phospho-beta-D-ribosyl)glycinamide is bound by residues 25–26 (EL) and Glu-85. ATP contacts are provided by residues Arg-118, Lys-159, 164–169 (SSGKGQ), 199–202 (EQFV), and Glu-207. One can recognise an ATP-grasp domain in the interval 123 to 318 (RLASEELGLP…EFELHAKAVL (196 aa)). The Mg(2+) site is built by Glu-277 and Glu-289. Residues Asp-296, Lys-365, and 372–373 (RR) contribute to the N(1)-(5-phospho-beta-D-ribosyl)glycinamide site.

The protein belongs to the PurK/PurT family. As to quaternary structure, homodimer.

It catalyses the reaction N(1)-(5-phospho-beta-D-ribosyl)glycinamide + formate + ATP = N(2)-formyl-N(1)-(5-phospho-beta-D-ribosyl)glycinamide + ADP + phosphate + H(+). The protein operates within purine metabolism; IMP biosynthesis via de novo pathway; N(2)-formyl-N(1)-(5-phospho-D-ribosyl)glycinamide from N(1)-(5-phospho-D-ribosyl)glycinamide (formate route): step 1/1. Its function is as follows. Involved in the de novo purine biosynthesis. Catalyzes the transfer of formate to 5-phospho-ribosyl-glycinamide (GAR), producing 5-phospho-ribosyl-N-formylglycinamide (FGAR). Formate is provided by PurU via hydrolysis of 10-formyl-tetrahydrofolate. This Corynebacterium efficiens (strain DSM 44549 / YS-314 / AJ 12310 / JCM 11189 / NBRC 100395) protein is Formate-dependent phosphoribosylglycinamide formyltransferase.